The chain runs to 363 residues: MSLQHFIQDALSQWMKQKGPESDIVLSSRIRLARNLEHVRFPTQFSQEEAQAVLQQFEQKFASQEVKDIGNFVLIRMNETQPLAKRVLVEKHLISPNLAESRFGGCLLSENEEISVMLNEEDHIRIQCLFPGFQLANALKAANQIDDWIEEQVDYAFSEKRGYLTSCPTNVGTGIRASVMMHLPALALTRQMNRIIPAINQLGLVVRGIYGEGSEAIGNIFQISNQMTLGQSEEDIVDDLNSVTAQLIEQERSARKALYQTSKIELEDRVYRSLGILSNCRMIESKETAKCLSDVRLGIDLGIIKGLSSNILNELMILTQPGFLQQYSGGALEPNERDIKRAAIIRERLRLEMHRNGQEDETI.

In terms of domain architecture, Phosphagen kinase C-terminal spans Ile24–Ala254. Residues Ser27–Arg31, His92, Arg125, Arg176–Met180, and Arg207–Glu212 contribute to the ATP site. Positions Arg337–Ala342 match the RDXXRA motif of the pArg binding pocket involved in allosteric regulation motif.

This sequence belongs to the ATP:guanido phosphotransferase family.

The enzyme catalyses L-arginyl-[protein] + ATP = N(omega)-phospho-L-arginyl-[protein] + ADP + H(+). Appears to be allosterically activated by the binding of pArg-containing polypeptides to the pArg-binding pocket localized in the C-terminal domain of McsB. Catalyzes the specific phosphorylation of arginine residues in a large number of proteins. Is part of the bacterial stress response system. Protein arginine phosphorylation has a physiologically important role and is involved in the regulation of many critical cellular processes, such as protein homeostasis, motility, competence, and stringent and stress responses, by regulating gene expression and protein activity. In Bacillus pumilus (strain SAFR-032), this protein is Protein-arginine kinase.